Reading from the N-terminus, the 500-residue chain is Glycerol kinase (500 aa).

Residue T12 participates in ADP binding. ATP is bound by residues T12, T13, and S14. T12 provides a ligand contact to sn-glycerol 3-phosphate. Residue R16 coordinates ADP. Residues R82, E83, Y135, and D245 each coordinate sn-glycerol 3-phosphate. Glycerol is bound by residues R82, E83, Y135, D245, and Q246. The ADP site is built by T267 and G310. Positions 267, 310, 314, and 411 each coordinate ATP. Positions 411 and 415 each coordinate ADP.

The protein belongs to the FGGY kinase family. As to quaternary structure, homotetramer and homodimer (in equilibrium).

It catalyses the reaction glycerol + ATP = sn-glycerol 3-phosphate + ADP + H(+). It participates in polyol metabolism; glycerol degradation via glycerol kinase pathway; sn-glycerol 3-phosphate from glycerol: step 1/1. With respect to regulation, activated by phosphorylation and inhibited by fructose 1,6-bisphosphate (FBP). Key enzyme in the regulation of glycerol uptake and metabolism. Catalyzes the phosphorylation of glycerol to yield sn-glycerol 3-phosphate. The chain is Glycerol kinase from Clostridium perfringens (strain ATCC 13124 / DSM 756 / JCM 1290 / NCIMB 6125 / NCTC 8237 / Type A).